The following is a 327-amino-acid chain: Ribonucleoside-diphosphate reductase small chain (327 aa).

Residues Asp70, Glu101, and His104 each coordinate Fe cation. Residue Tyr108 is part of the active site. Positions 164, 198, and 201 each coordinate Fe cation.

This sequence belongs to the ribonucleoside diphosphate reductase small chain family. Heterotetramer composed of a homodimer of the large subunit (R1) and a homodimer of the small subunit (R2). Larger multisubunit protein complex are also active, composed of (R1)n(R2)n. Fe cation serves as cofactor.

The catalysed reaction is a 2'-deoxyribonucleoside 5'-diphosphate + [thioredoxin]-disulfide + H2O = a ribonucleoside 5'-diphosphate + [thioredoxin]-dithiol. Functionally, ribonucleoside-diphosphate reductase holoenzyme provides the precursors necessary for viral DNA synthesis. Allows virus growth in non-dividing cells. Catalyzes the biosynthesis of deoxyribonucleotides from the corresponding ribonucleotides. The sequence is that of Ribonucleoside-diphosphate reductase small chain from Ornithodoros (relapsing fever ticks).